Consider the following 479-residue polypeptide: PTS system sucrose-specific EIIBC component (479 aa).

The PTS EIIB type-1 domain occupies 4 to 87 (PAVAKELLTL…AKLTGMSEMS (84 aa)). The Phosphocysteine intermediate; for EIIB activity role is filled by cysteine 26. 11 consecutive transmembrane segments (helical) span residues 112-132 (IFVPIIPAIVAGGLLMGIYNL), 158-178 (MINTFANAPFVYLPILLAFSA), 182-202 (FGGNPYLGAALGMLMVHPDLL), 204-224 (GWGFGGASVSGNIPVWNILGF), 232-252 (QGSVLPVLVSAFILAKVELGL), 264-284 (LTPLLAIFIAGLLTFTVVGPF), 303-323 (AGFVGGAVFGLIYAPFVITGM), 345-365 (FIFPIAAMSNVSQGAAALAVG), 376-396 (IAIPSGVTGLLGITEPAMFGV), 403-423 (PFIAAVCAAALSSAFITMFNV), and 448-468 (IAGMVIAFLTAFVLTIVLGIG). One can recognise a PTS EIIC type-1 domain in the interval 120–477 (IVAGGLLMGI…GDRAKVGKKA (358 aa)).

The protein resides in the cell inner membrane. It carries out the reaction N(pros)-phospho-L-histidyl-[protein](out) + sucrose = sucrose 6(G)-phosphate(in) + L-histidyl-[protein]. In terms of biological role, the phosphoenolpyruvate-dependent sugar phosphotransferase system (sugar PTS), a major carbohydrate active transport system, catalyzes the phosphorylation of incoming sugar substrates concomitantly with their translocation across the cell membrane. This system is involved in sucrose transport. In Vibrio alginolyticus, this protein is PTS system sucrose-specific EIIBC component.